The primary structure comprises 265 residues: Hydroxyethylthiazole kinase (265 aa).

Position 50 (Met-50) interacts with substrate. Positions 125 and 171 each coordinate ATP. Gly-198 provides a ligand contact to substrate.

It belongs to the Thz kinase family. Mg(2+) serves as cofactor.

It catalyses the reaction 5-(2-hydroxyethyl)-4-methylthiazole + ATP = 4-methyl-5-(2-phosphooxyethyl)-thiazole + ADP + H(+). It functions in the pathway cofactor biosynthesis; thiamine diphosphate biosynthesis; 4-methyl-5-(2-phosphoethyl)-thiazole from 5-(2-hydroxyethyl)-4-methylthiazole: step 1/1. Its function is as follows. Catalyzes the phosphorylation of the hydroxyl group of 4-methyl-5-beta-hydroxyethylthiazole (THZ). The sequence is that of Hydroxyethylthiazole kinase from Salmonella paratyphi C (strain RKS4594).